The following is a 206-amino-acid chain: N-(5'-phosphoribosyl)anthranilate isomerase (206 aa).

Belongs to the TrpF family.

The catalysed reaction is N-(5-phospho-beta-D-ribosyl)anthranilate = 1-(2-carboxyphenylamino)-1-deoxy-D-ribulose 5-phosphate. It participates in amino-acid biosynthesis; L-tryptophan biosynthesis; L-tryptophan from chorismate: step 3/5. This is N-(5'-phosphoribosyl)anthranilate isomerase from Pseudomonas syringae pv. tomato (strain ATCC BAA-871 / DC3000).